The following is a 1304-amino-acid chain: MQLKIMPKKKRLSAGRVPLILFLCQMISALEVPLDPKLLEDLVQPPTITQQSPKDYIIDPRENIVIQCEAKGKPPPSFSWTRNGTHFDIDKDPLVTMKPGTGTLIINIMSEGKAETYEGVYQCTARNERGAAVSNNIVVRPSRSPLWTKEKLEPITLQSGQSLVLPCRPPIGLPPPIIFWMDNSFQRLPQSERVSQGLNGDLYFSNVLPEDTREDYICYARFNHTQTIQQKQPISVKVISVDELNDTIAANLSDTEFYGAKSSRERPPTFLTPEGNASNKEELRGNVLSLECIAEGLPTPIIYWAKEDGMLPKNRTVYKNFEKTLQIIHVSEADSGNYQCIAKNALGAIHHTISVRVKAAPYWITAPQNLVLSPGEDGTLICRANGNPKPRISWLTNGVPIEIAPDDPSRKIDGDTIIFSNVQERSSAVYQCNASNEYGYLLANAFVNVLAEPPRILTPANTLYQVIANRPALLDCAFFGSPLPTIEWFKGAKGSALHEDIYVLHENGTLEIPVAQKDSTGTYTCVARNKLGMAKNEVHLEIKDPTWIVKQPEYAVVQRGSMVSFECKVKHDHTLSLTVLWLKDNRELPSDERFTVDKDHLVVADVSDDDSGTYTCVANTTLDSVSASAVLSVVAPTPTPAPVYDVPNPPFDLELTDQLDKSVQLSWTPGDDNNSPITKFIIEYEDAMHKPGLWHHQTEVSGTQTTAQLKLSPYVNYSFRVMAVNSIGKSLPSEASEQYLTKASEPDKNPTAVEGLGSEPDNLVITWKPLNGFESNGPGLQYKVSWRQKDGDDEWTSVVVANVSKYIVSGTPTFVPYLIKVQALNDMGFAPEPAVVMGHSGEDLPMVAPGNVRVNVVNSTLAEVHWDPVPLKSIRGHLQGYRIYYWKTQSSSKRNRRHIEKKILTFQGSKTHGMLPGLEPFSHYTLNVRVVNGKGEGPASPDRVFNTPEGVPSAPSSLKIVNPTLDSLTLEWDPPSHPNGILTEYTLKYQPINSTHELGPLVDLKIPANKTRWTLKNLNFSTRYKFYFYAQTSAGSGSQITEEAVTTVDEAGILPPDVGAGKVQAVNPRISNLTAAAAETYANISWEYEGPEHVNFYVEYGVAGSKEEWRKEIVNGSRSFFGLKGLMPGTAYKVRVGAVGDSGFVSSEDVFETGPAMASRQVDIATQGWFIGLMCAVALLILILLIVCFIRRNKGGKYPVKEKEDAHADPEIQPMKEDDGTFGEYSDAEDHKPLKKGSRTPSDRTVKKEDSDDSLVDYGEGVNGQFNEDGSFIGQYSGKKEKEPAEGNESSEAPSPVNAMNSFV.

Residues 1 to 24 (MQLKIMPKKKRLSAGRVPLILFLC) form the signal peptide. Residues 25 to 1167 (QMISALEVPL…ASRQVDIATQ (1143 aa)) lie on the Extracellular side of the membrane. Ig-like domains are found at residues 46–134 (PTIT…AAVS) and 141–235 (PSRS…QPIS). Cystine bridges form between Cys68-Cys123 and Cys167-Cys218. Asn83 carries an N-linked (GlcNAc...) asparagine glycan. Residues Asn223, Asn245, Asn251, Asn276, and Asn314 are each glycosylated (N-linked (GlcNAc...) asparagine). Ig-like domains lie at 267-356 (PPTF…ISVR), 361-448 (PYWI…AFVN), 454-541 (PRIL…VHLE), and 545-632 (PTWI…AVLS). Cystine bridges form between Cys292–Cys340 and Cys382–Cys432. N-linked (GlcNAc...) asparagine glycans are attached at residues Asn433 and Asn507. Disulfide bonds link Cys476-Cys525 and Cys567-Cys616. Residues Asn619, Asn716, and Asn802 are each glycosylated (N-linked (GlcNAc...) asparagine). 5 Fibronectin type-III domains span residues 649–744 (PPFD…TKAS), 746–843 (PDKN…SGED), 848–950 (APGN…TPEG), 954–1051 (APSS…VDEA), and 1064–1156 (QAVN…TGPA). A glycan (N-linked (GlcNAc...) (complex) asparagine) is linked at Asn858. Asn993, Asn1009, Asn1019, Asn1072, Asn1083, and Asn1115 each carry an N-linked (GlcNAc...) asparagine glycan. A helical membrane pass occupies residues 1168 to 1190 (GWFIGLMCAVALLILILLIVCFI). Residues 1191–1304 (RRNKGGKYPV…SPVNAMNSFV (114 aa)) are Cytoplasmic-facing. The segment covering 1199–1219 (PVKEKEDAHADPEIQPMKEDD) has biased composition (basic and acidic residues). The segment at 1199–1304 (PVKEKEDAHA…SPVNAMNSFV (106 aa)) is disordered. Thr1221 is subject to Phosphothreonine. Tyr1225 carries the post-translational modification Phosphotyrosine. Residue Ser1226 is modified to Phosphoserine. Basic and acidic residues predominate over residues 1241-1250 (PSDRTVKKED). Phosphoserine occurs at positions 1251, 1254, 1271, 1290, 1291, and 1295. Polar residues predominate over residues 1288–1304 (NESSEAPSPVNAMNSFV).

The protein belongs to the immunoglobulin superfamily. L1/neurofascin/NgCAM family. As to quaternary structure, constituent of a NFASC/NRCAM/ankyrin-G complex. Detected in a complex with CNTN1 and PTPRB. Interacts with GLDN/gliomedin. Interacts with MYOC. Detected in all the examined tissues. In the brain it was detected in the amygdala, caudate nucleus, corpus callosum, hippocampus, hypothalamus, substantia nigra, subthalamic nucleus and thalamus.

It is found in the cell membrane. Its subcellular location is the cell projection. It localises to the axon. The protein resides in the secreted. Its function is as follows. Cell adhesion protein that is required for normal responses to cell-cell contacts in brain and in the peripheral nervous system. Plays a role in neurite outgrowth in response to contactin binding. Plays a role in mediating cell-cell contacts between Schwann cells and axons. Plays a role in the formation and maintenance of the nodes of Ranvier on myelinated axons. Nodes of Ranvier contain clustered sodium channels that are crucial for the saltatory propagation of action potentials along myelinated axons. During development, nodes of Ranvier are formed by the fusion of two heminodes. Required for normal clustering of sodium channels at heminodes; not required for the formation of mature nodes with normal sodium channel clusters. Required, together with GLDN, for maintaining NFASC and sodium channel clusters at mature nodes of Ranvier. This is Neuronal cell adhesion molecule (NRCAM) from Homo sapiens (Human).